We begin with the raw amino-acid sequence, 338 residues long: Large ribosomal subunit protein uL3 (338 aa).

A compositionally biased stretch (basic residues) spans 228 to 237; the sequence is HKHRKGHRRT. Residues 228-255 form a disordered region; sequence HKHRKGHRRTGTIGPQAPALMFTQPRPG.

It belongs to the universal ribosomal protein uL3 family. Part of the 50S ribosomal subunit. Forms a cluster with proteins L14 and L24e.

Functionally, one of the primary rRNA binding proteins, it binds directly near the 3'-end of the 23S rRNA, where it nucleates assembly of the 50S subunit. This is Large ribosomal subunit protein uL3 from Pyrobaculum calidifontis (strain DSM 21063 / JCM 11548 / VA1).